The following is a 174-amino-acid chain: uncharacterized protein (174 aa).

A run of 2 helical transmembrane segments spans residues 29–51 and 66–83; these read FAVELIPAINYFIFVGLCFGFWY and VIVIFGIPFFLTMLVTKI.

It is found in the cell membrane. This is an uncharacterized protein from Bacillus subtilis (strain 168).